Reading from the N-terminus, the 632-residue chain is Phosphomethylpyrimidine synthase (632 aa).

Substrate contacts are provided by residues Asn237, Met266, Tyr295, His331, 351–353 (SRG), 392–395 (DGLR), and Glu431. Position 435 (His435) interacts with Zn(2+). Residue Tyr458 participates in substrate binding. His499 contacts Zn(2+). 3 residues coordinate [4Fe-4S] cluster: Cys579, Cys582, and Cys587.

It belongs to the ThiC family. Homodimer. Requires [4Fe-4S] cluster as cofactor.

The catalysed reaction is 5-amino-1-(5-phospho-beta-D-ribosyl)imidazole + S-adenosyl-L-methionine = 4-amino-2-methyl-5-(phosphooxymethyl)pyrimidine + CO + 5'-deoxyadenosine + formate + L-methionine + 3 H(+). It participates in cofactor biosynthesis; thiamine diphosphate biosynthesis. Functionally, catalyzes the synthesis of the hydroxymethylpyrimidine phosphate (HMP-P) moiety of thiamine from aminoimidazole ribotide (AIR) in a radical S-adenosyl-L-methionine (SAM)-dependent reaction. This Nitrosomonas eutropha (strain DSM 101675 / C91 / Nm57) protein is Phosphomethylpyrimidine synthase.